The primary structure comprises 161 residues: Tropomyosin-2 (161 aa).

The stretch at 1–161 (MEKIKEKLNS…DEIANSLENL (161 aa)) forms a coiled coil. Positions 32–43 (LEQSNTEKENEI) are enriched in basic and acidic residues. The tract at residues 32–97 (LEQSNTEKEN…NQDLEQQLED (66 aa)) is disordered. Ser-55 carries the post-translational modification Phosphoserine. Positions 62–83 (SQLSDTKQLAEDSNNLRSNNEN) are enriched in polar residues. 2 positions are modified to phosphoserine: Ser-116 and Ser-157.

Homodimer.

It localises to the cytoplasm. Its subcellular location is the cytoskeleton. In terms of biological role, involved in cell morphogenesis. Binds to F-actin and stabilizes the actin filaments. This is Tropomyosin-2 (TPM2) from Saccharomyces cerevisiae (strain ATCC 204508 / S288c) (Baker's yeast).